Consider the following 250-residue polypeptide: Triosephosphate isomerase (250 aa).

Position 9–11 (9–11) interacts with substrate; it reads NWK. Residue His-96 is the Electrophile of the active site. Catalysis depends on Glu-168, which acts as the Proton acceptor. Substrate contacts are provided by residues Gly-174, Ser-216, and 237-238; that span reads GG.

This sequence belongs to the triosephosphate isomerase family. In terms of assembly, homodimer.

It localises to the cytoplasm. The enzyme catalyses D-glyceraldehyde 3-phosphate = dihydroxyacetone phosphate. Its pathway is carbohydrate biosynthesis; gluconeogenesis. It functions in the pathway carbohydrate degradation; glycolysis; D-glyceraldehyde 3-phosphate from glycerone phosphate: step 1/1. Its function is as follows. Involved in the gluconeogenesis. Catalyzes stereospecifically the conversion of dihydroxyacetone phosphate (DHAP) to D-glyceraldehyde-3-phosphate (G3P). The chain is Triosephosphate isomerase from Leptospira interrogans serogroup Icterohaemorrhagiae serovar copenhageni (strain Fiocruz L1-130).